Reading from the N-terminus, the 179-residue chain is uncharacterized protein (179 aa).

Composition is skewed to polar residues over residues Pro1 to Gly37 and Ile60 to Ser70. Disordered stretches follow at residues Pro1 to Lys41 and Ile60 to Arg82.

As to expression, component of the acid-soluble and acid-insoluble organic matrix of calcified shell layers (at protein level).

It localises to the secreted. This is an uncharacterized protein from Haliotis asinina (Donkey's ear abalone).